The chain runs to 571 residues: Gag-Pro polyprotein (571 aa).

G2 is lipidated: N-myristoyl glycine; by host. Residues 100–103 carry the PPXY motif motif; sequence PPPY. Repeats lie at residues 342 to 362 and 367 to 387; these read PPPG…DCPT. 2 CCHC-type zinc fingers span residues 345-362 and 370-387; these read GPCY…DCPT and GPCP…DCPT. In terms of domain architecture, Peptidase A2 spans 447-525; the sequence is ALMLVDTGAE…DKWQILGRDV (79 aa). Residue D452 is the Protease; shared with dimeric partner of the active site.

Homodimer; the homodimers are part of the immature particles. Interacts with human TSG101 and NEDD4; these interactions are essential for budding and release of viral particles. As to quaternary structure, homodimer; further assembles as homohexamers. Post-translationally, specific enzymatic cleavages by the viral protease yield mature proteins. The polyprotein is cleaved during and after budding, this process is termed maturation. The protease is autoproteolytically processed at its N- and C-termini. Gag polyprotein: Myristoylated. Myristoylation of the matrix (MA) domain mediates the transport and binding of Gag polyproteins to the host plasma membrane and is required for the assembly of viral particles.

The protein resides in the virion. The matrix domain targets Gag, Gag-Pro and Gag-Pro-Pol polyproteins to the plasma membrane via a multipartite membrane binding signal, that includes its myristoylated N-terminus. Its function is as follows. Matrix protein. Functionally, forms the spherical core of the virus that encapsulates the genomic RNA-nucleocapsid complex. In terms of biological role, binds strongly to viral nucleic acids and promote their aggregation. Also destabilizes the nucleic acids duplexes via highly structured zinc-binding motifs. The aspartyl protease mediates proteolytic cleavages of Gag and Gag-Pol polyproteins during or shortly after the release of the virion from the plasma membrane. Cleavages take place as an ordered, step-wise cascade to yield mature proteins. This process is called maturation. Displays maximal activity during the budding process just prior to particle release from the cell. The polypeptide is Gag-Pro polyprotein (Bos taurus (Bovine)).